The following is a 303-amino-acid chain: 4-hydroxy-3-methylbut-2-enyl diphosphate reductase (303 aa).

Position 12 (Cys12) interacts with [4Fe-4S] cluster. Residues His42 and His75 each contribute to the (2E)-4-hydroxy-3-methylbut-2-enyl diphosphate site. The dimethylallyl diphosphate site is built by His42 and His75. The isopentenyl diphosphate site is built by His42 and His75. Cys97 is a binding site for [4Fe-4S] cluster. A (2E)-4-hydroxy-3-methylbut-2-enyl diphosphate-binding site is contributed by His125. Position 125 (His125) interacts with dimethylallyl diphosphate. His125 is an isopentenyl diphosphate binding site. Glu127 functions as the Proton donor in the catalytic mechanism. Ser164 contributes to the (2E)-4-hydroxy-3-methylbut-2-enyl diphosphate binding site. Cys192 contributes to the [4Fe-4S] cluster binding site. (2E)-4-hydroxy-3-methylbut-2-enyl diphosphate contacts are provided by Ser220, Ser221, Asn222, and Ser264. Ser220, Ser221, Asn222, and Ser264 together coordinate dimethylallyl diphosphate. The isopentenyl diphosphate site is built by Ser220, Ser221, Asn222, and Ser264.

This sequence belongs to the IspH family. The cofactor is [4Fe-4S] cluster.

It catalyses the reaction isopentenyl diphosphate + 2 oxidized [2Fe-2S]-[ferredoxin] + H2O = (2E)-4-hydroxy-3-methylbut-2-enyl diphosphate + 2 reduced [2Fe-2S]-[ferredoxin] + 2 H(+). The catalysed reaction is dimethylallyl diphosphate + 2 oxidized [2Fe-2S]-[ferredoxin] + H2O = (2E)-4-hydroxy-3-methylbut-2-enyl diphosphate + 2 reduced [2Fe-2S]-[ferredoxin] + 2 H(+). The protein operates within isoprenoid biosynthesis; dimethylallyl diphosphate biosynthesis; dimethylallyl diphosphate from (2E)-4-hydroxy-3-methylbutenyl diphosphate: step 1/1. It participates in isoprenoid biosynthesis; isopentenyl diphosphate biosynthesis via DXP pathway; isopentenyl diphosphate from 1-deoxy-D-xylulose 5-phosphate: step 6/6. Functionally, catalyzes the conversion of 1-hydroxy-2-methyl-2-(E)-butenyl 4-diphosphate (HMBPP) into a mixture of isopentenyl diphosphate (IPP) and dimethylallyl diphosphate (DMAPP). Acts in the terminal step of the DOXP/MEP pathway for isoprenoid precursor biosynthesis. The chain is 4-hydroxy-3-methylbut-2-enyl diphosphate reductase from Neorickettsia sennetsu (strain ATCC VR-367 / Miyayama) (Ehrlichia sennetsu).